The chain runs to 439 residues: Protein CNPPD1 (439 aa).

A helical membrane pass occupies residues 231-251 (CLLGVVYLTGFAAVFTSIAVV). The segment at 283–302 (ALAPEQPQPKLPDVSPPSST) is disordered.

Belongs to the CNPPD1 family.

The protein resides in the membrane. The protein is Protein CNPPD1 (CNPPD1) of Gallus gallus (Chicken).